A 617-amino-acid polypeptide reads, in one-letter code: MKQSKMPIPTLREMPSDAQVISHALMLRAGYVRQVSAGVYSYLPLANRVIEKAKNIMRQEFEKIGAVEMLAPALLSAELWRESGRYETYGEDLYKLKNREKSDFILGPTHEETFTAIVRDSVKSYKQLPLNLYQIQPKYRDEKRPRNGLLRTREFIMKDAYSFHANYDSLDSVYDEYKAAYERIFTRSGLDFKAIIGDGGAMGGKDSQEFMAITSARTDLDRWVVLDKSVASFDEIPAEVQEEIKAELLKWIVSGEDTIAYSSESSYAANLEMATNEYKPSNRVVAEEEVTRVATPDVKSIDEVAAFLNVPEEQTIKTLFYIADGELVAALLVGNDQLNEVKLKNHLGADFFDVASEEEVANVVQAGFGSLGPVGLPENIKIIADRKVQDVRNAVVGANEDDYHLTGVNPGRDFTAEYVDIREVREGEISPDGQGVLNFARGIEIGHIFKLGTRYSASMGADVLDENGRAVPIIMGCYGIGVSRLLSAVMEQHARLFVNKTPKGEYRYAWGINFPKELAPFDVHLITVNVKDEEAQALTEKLEASLMGAGYEVLTDDRNERVGVKFSDSDLIGLPIRITVGKKAADGIVEVKIKATGDTIEVHADNVLETLEILSKK.

Belongs to the class-II aminoacyl-tRNA synthetase family. ProS type 1 subfamily. As to quaternary structure, homodimer.

The protein localises to the cytoplasm. It catalyses the reaction tRNA(Pro) + L-proline + ATP = L-prolyl-tRNA(Pro) + AMP + diphosphate. Its function is as follows. Catalyzes the attachment of proline to tRNA(Pro) in a two-step reaction: proline is first activated by ATP to form Pro-AMP and then transferred to the acceptor end of tRNA(Pro). As ProRS can inadvertently accommodate and process non-cognate amino acids such as alanine and cysteine, to avoid such errors it has two additional distinct editing activities against alanine. One activity is designated as 'pretransfer' editing and involves the tRNA(Pro)-independent hydrolysis of activated Ala-AMP. The other activity is designated 'posttransfer' editing and involves deacylation of mischarged Ala-tRNA(Pro). The misacylated Cys-tRNA(Pro) is not edited by ProRS. This is Proline--tRNA ligase from Streptococcus pneumoniae serotype 4 (strain ATCC BAA-334 / TIGR4).